The sequence spans 72 residues: Potassium channel toxin epsilon-KTx 1.1 (72 aa).

Residues 1-30 form the signal peptide; the sequence is MKLSCGFLLILLVLSAMIATFSEVEAMKPS. 4 disulfides stabilise this stretch: cysteine 34–cysteine 42, cysteine 37–cysteine 58, cysteine 41–cysteine 51, and cysteine 46–cysteine 56. Residues 60 to 72 constitute a propeptide that is removed on maturation; it reads GRSDLNDELEKYQ.

Belongs to the short scorpion toxin superfamily. Potassium channel inhibitor family. Epsilon-KTx 01 subfamily. Expressed by the venom gland.

The protein localises to the secreted. In terms of biological role, potassium channel blocker. At 3 uM, this toxin blocks voltage-independently voltage-gated potassium channels rKv1.2/KCNA2 (25%), hKv1.3/KCNA3 (27%), rKv4.2/KCND2 (25%), Kv10.1/KCNH1/EAG1 (15%), Kv11/hERG (12%), and Shaker-IR (10%). On hKv1.3/KCNA3, the IC(50) is 17.1 +-3.3 uM. This chain is Potassium channel toxin epsilon-KTx 1.1, found in Tityus serrulatus (Brazilian scorpion).